The primary structure comprises 483 residues: Trimethylamine methyltransferase MttB (483 aa).

Position 334 (pyrrolysine 334) is a non-standard amino acid, pyrrolysine.

The protein belongs to the trimethylamine methyltransferase family. As to quaternary structure, can form a complex with MttC.

It carries out the reaction Co(I)-[trimethylamine-specific corrinoid protein] + trimethylamine + H(+) = methyl-Co(III)-[trimethylamine-specific corrinoid protein] + dimethylamine. It participates in one-carbon metabolism; methanogenesis from trimethylamine. Its function is as follows. Catalyzes the transfer of a methyl group from trimethylamine to the corrinoid cofactor of MttC. This is Trimethylamine methyltransferase MttB (mttB) from Methanosarcina thermophila.